The primary structure comprises 67 residues: UPF0437 protein y4xE (67 aa).

The protein belongs to the UPF0437 family.

In Sinorhizobium fredii (strain NBRC 101917 / NGR234), this protein is UPF0437 protein y4xE.